Here is a 683-residue protein sequence, read N- to C-terminus: PTS system mannose-specific EIIBCA component (683 aa).

Residues 1 to 89 (MASKLTTTSQ…LKLDGMKHFA (89 aa)) form the PTS EIIB type-1 domain. Catalysis depends on Cys-28, which acts as the Phosphocysteine intermediate; for EIIB activity. The PTS EIIC type-1 domain occupies 117–476 (EFLSDTFRPI…NEERDEARAK (360 aa)). The next 10 membrane-spanning stretches (helical) occupy residues 126 to 146 (ILWALLGASLIITLLVLADTF), 162 to 182 (YVFLHSMWRSVFYFLPIMVGA), 193 to 213 (WIGAAIPAALLTPEFLALGSA), 225 to 245 (VLNDYSGQVFPPLIAAIGLYW), 260 to 280 (MVFVPFFSLLIMIPATAFLLG), 303 to 323 (FILSIVIPLLYPFLVPLGLHW), 344 to 364 (PMGAWNFACFGLVTGVFLLSI), 376 to 396 (LGGMLAGLLGGISEPSLYGVL), 409 to 429 (GCLAGGIVMGIFDIKAYAFVF), and 442 to 462 (LGYTIGIAVAFFVSMFLVLAL). One can recognise a PTS EIIA type-1 domain in the interval 550–654 (DPIFAAGKLG…PLITPVVVSN (105 aa)). The Tele-phosphohistidine intermediate; for EIIA activity role is filled by His-602.

It localises to the cell membrane. The catalysed reaction is D-mannose(out) + N(pros)-phospho-L-histidyl-[protein] = D-mannose 6-phosphate(in) + L-histidyl-[protein]. Functionally, the phosphoenolpyruvate-dependent sugar phosphotransferase system (sugar PTS), a major carbohydrate active -transport system, catalyzes the phosphorylation of incoming sugar substrates concomitantly with their translocation across the cell membrane. This system is involved in mannose transport. The protein is PTS system mannose-specific EIIBCA component (ptsM) of Corynebacterium glutamicum (strain ATCC 13032 / DSM 20300 / JCM 1318 / BCRC 11384 / CCUG 27702 / LMG 3730 / NBRC 12168 / NCIMB 10025 / NRRL B-2784 / 534).